The sequence spans 163 residues: MSSFDIVSELTIHEVRNAVENANRVLSTRYDFRGVDATIELNEKNELIRVTTESDFQLEQLIEILIGCCIKRGIQHTSLDIPSESEHHGKLYTKEIKLKQGIKSDMAKQLVKLIKGSKIKVQAQIQGDSIRITGKSRDDLQSTIQLVKNAELGQPLQFNNFRD.

This sequence belongs to the YajQ family.

Functionally, nucleotide-binding protein. The protein is Nucleotide-binding protein HAPS_2236 of Glaesserella parasuis serovar 5 (strain SH0165) (Haemophilus parasuis).